We begin with the raw amino-acid sequence, 416 residues long: Serine hydroxymethyltransferase (416 aa).

Residues leucine 121 and 125–127 (GHL) contribute to the (6S)-5,6,7,8-tetrahydrofolate site. Lysine 229 is modified (N6-(pyridoxal phosphate)lysine). (6S)-5,6,7,8-tetrahydrofolate is bound by residues glutamate 245 and 354 to 356 (SPF).

The protein belongs to the SHMT family. Homodimer. It depends on pyridoxal 5'-phosphate as a cofactor.

Its subcellular location is the cytoplasm. The catalysed reaction is (6R)-5,10-methylene-5,6,7,8-tetrahydrofolate + glycine + H2O = (6S)-5,6,7,8-tetrahydrofolate + L-serine. It functions in the pathway one-carbon metabolism; tetrahydrofolate interconversion. The protein operates within amino-acid biosynthesis; glycine biosynthesis; glycine from L-serine: step 1/1. Its function is as follows. Catalyzes the reversible interconversion of serine and glycine with tetrahydrofolate (THF) serving as the one-carbon carrier. This reaction serves as the major source of one-carbon groups required for the biosynthesis of purines, thymidylate, methionine, and other important biomolecules. Also exhibits THF-independent aldolase activity toward beta-hydroxyamino acids, producing glycine and aldehydes, via a retro-aldol mechanism. The polypeptide is Serine hydroxymethyltransferase (Aliivibrio fischeri (strain ATCC 700601 / ES114) (Vibrio fischeri)).